The chain runs to 444 residues: Ribulose bisphosphate carboxylase large chain (444 aa).

Lys5 is subject to N6,N6,N6-trimethyllysine. The substrate site is built by Asn114 and Thr164. Lys166 (proton acceptor) is an active-site residue. Lys168 serves as a coordination point for substrate. Residues Lys192, Asp194, and Glu195 each coordinate Mg(2+). Lys192 carries the post-translational modification N6-carboxylysine. The active-site Proton acceptor is the His285. 3 residues coordinate substrate: Arg286, His318, and Ser370.

Belongs to the RuBisCO large chain family. Type I subfamily. Heterohexadecamer of 8 large chains and 8 small chains; disulfide-linked. The disulfide link is formed within the large subunit homodimers. Mg(2+) serves as cofactor. The disulfide bond which can form in the large chain dimeric partners within the hexadecamer appears to be associated with oxidative stress and protein turnover.

The protein resides in the plastid. Its subcellular location is the chloroplast. The catalysed reaction is 2 (2R)-3-phosphoglycerate + 2 H(+) = D-ribulose 1,5-bisphosphate + CO2 + H2O. It carries out the reaction D-ribulose 1,5-bisphosphate + O2 = 2-phosphoglycolate + (2R)-3-phosphoglycerate + 2 H(+). In terms of biological role, ruBisCO catalyzes two reactions: the carboxylation of D-ribulose 1,5-bisphosphate, the primary event in carbon dioxide fixation, as well as the oxidative fragmentation of the pentose substrate in the photorespiration process. Both reactions occur simultaneously and in competition at the same active site. The sequence is that of Ribulose bisphosphate carboxylase large chain from Botrychium strictum (Fern).